We begin with the raw amino-acid sequence, 288 residues long: Diaminopimelate epimerase (288 aa).

Substrate contacts are provided by N13, Q51, and N71. C80 acts as the Proton donor in catalysis. Substrate is bound by residues 81-82 (GN), N166, N200, and 218-219 (ER). C227 acts as the Proton acceptor in catalysis. Residue 228 to 229 (GT) coordinates substrate.

This sequence belongs to the diaminopimelate epimerase family. As to quaternary structure, homodimer.

It is found in the cytoplasm. It carries out the reaction (2S,6S)-2,6-diaminopimelate = meso-2,6-diaminopimelate. Its pathway is amino-acid biosynthesis; L-lysine biosynthesis via DAP pathway; DL-2,6-diaminopimelate from LL-2,6-diaminopimelate: step 1/1. In terms of biological role, catalyzes the stereoinversion of LL-2,6-diaminopimelate (L,L-DAP) to meso-diaminopimelate (meso-DAP), a precursor of L-lysine and an essential component of the bacterial peptidoglycan. The polypeptide is Diaminopimelate epimerase (Caulobacter vibrioides (strain ATCC 19089 / CIP 103742 / CB 15) (Caulobacter crescentus)).